The primary structure comprises 345 residues: L-Ala-D/L-Glu epimerase (345 aa).

Residues Thr134 and Lys159 each contribute to the substrate site. Lys161 functions as the Proton acceptor; specific for (R)-substrate epimerization in the catalytic mechanism. Asp188 serves as a coordination point for Mg(2+). A substrate-binding site is contributed by Asn190. Mg(2+) is bound by residues Glu216 and Asp241. Lys265 functions as the Proton acceptor; specific for (S)-substrate epimerization in the catalytic mechanism. Residues Cys292, Asp317, and Asp319 each contribute to the substrate site.

This sequence belongs to the mandelate racemase/muconate lactonizing enzyme family. Mg(2+) serves as cofactor.

It catalyses the reaction L-alanyl-L-glutamate = L-alanyl-D-glutamate. It functions in the pathway cell wall degradation; peptidoglycan degradation. Functionally, catalyzes the epimerization of L-Ala-D-Glu to L-Ala-L-Glu and has probably a role in the metabolism of the murein peptide, of which L-Ala-D-Glu is a component. Is also able to catalyze the reverse reaction and the epimerization of a broad range of other dipeptides; is most efficient with L-Ala-D/L-Phe, L-Ala-D/L-Tyr, and L-Ala-D/L-His. This is L-Ala-D/L-Glu epimerase from Thermotoga maritima (strain ATCC 43589 / DSM 3109 / JCM 10099 / NBRC 100826 / MSB8).